Reading from the N-terminus, the 355-residue chain is Electron transfer flavoprotein subunit alpha, mitochondrial (355 aa).

Position 295–323 (295–323 (LYIAVGISGAIQHLAGMKDSKVIVAINKD)) interacts with FAD.

It belongs to the ETF alpha-subunit/FixB family. Heterodimer of an alpha and a beta subunit. FAD serves as cofactor.

It is found in the mitochondrion matrix. Its function is as follows. The electron transfer flavoprotein serves as a specific electron acceptor for several dehydrogenases, including five acyl-CoA dehydrogenases, glutaryl-CoA and sarcosine dehydrogenase. It transfers the electrons to the main mitochondrial respiratory chain via ETF-ubiquinone oxidoreductase (ETF dehydrogenase). This is Electron transfer flavoprotein subunit alpha, mitochondrial (etfa) from Dictyostelium discoideum (Social amoeba).